The primary structure comprises 34 residues: Toxin GTx1-15 (34 aa).

3 disulfides stabilise this stretch: Cys-2–Cys-17, Cys-9–Cys-23, and Cys-16–Cys-30. Phenylalanine amide is present on Phe-34.

It belongs to the neurotoxin 10 (Hwtx-1) family. 08 (Gtx1-15) subfamily. Expressed by the venom gland.

It is found in the secreted. In terms of biological role, potent voltage-gated sodium channel blocker. Potently inhibits the voltage-gated sodium channels Nav1.7/SCN9A (IC(50)=0.58-10 nM). Also shows a moderate activity on Nav1.1/SCN1A (IC(50)=6 nM), Nav1.2/SCN2A (IC(50)=5-128 nM), Nav1.3/SCN3A (IC(50)=20.3-170 nM), and Nav1.6/SCN8A (IC(50)=17-20.1 nM). Shows an unclear inhibition of Nav1.4/SCN4A (IC(50)=200 nM to &gt;10 uM), Nav1.5/SCN5A (IC(50)=140 nM to &gt;10 uM) and Nav1.8/SCN10A (IC(50)=68-12200 nM). Weakly blocks the low voltage-gated calcium channels Cav3.1/CACNA1G (30% inhibition of the peak current at 9.8 nM). shows moderate affinity for lipid bilayers. In vivo, when tested on the OD1-induced mouse model of Nav1.7/SCN9A-mediated pain, the toxin is effective when co-administered with OD1, but lacks efficacy when delivered systemically. The sequence is that of Toxin GTx1-15 from Grammostola porteri (Tarantula spider).